The following is a 216-amino-acid chain: Phosphatidylserine decarboxylase proenzyme (216 aa).

Residue Ser185 is the Schiff-base intermediate with substrate; via pyruvic acid of the active site. Ser185 carries the post-translational modification Pyruvic acid (Ser); by autocatalysis.

Belongs to the phosphatidylserine decarboxylase family. PSD-A subfamily. As to quaternary structure, heterodimer of a large membrane-associated beta subunit and a small pyruvoyl-containing alpha subunit. Pyruvate is required as a cofactor. Is synthesized initially as an inactive proenzyme. Formation of the active enzyme involves a self-maturation process in which the active site pyruvoyl group is generated from an internal serine residue via an autocatalytic post-translational modification. Two non-identical subunits are generated from the proenzyme in this reaction, and the pyruvate is formed at the N-terminus of the alpha chain, which is derived from the carboxyl end of the proenzyme. The post-translation cleavage follows an unusual pathway, termed non-hydrolytic serinolysis, in which the side chain hydroxyl group of the serine supplies its oxygen atom to form the C-terminus of the beta chain, while the remainder of the serine residue undergoes an oxidative deamination to produce ammonia and the pyruvoyl prosthetic group on the alpha chain.

Its subcellular location is the cell membrane. It catalyses the reaction a 1,2-diacyl-sn-glycero-3-phospho-L-serine + H(+) = a 1,2-diacyl-sn-glycero-3-phosphoethanolamine + CO2. Its pathway is phospholipid metabolism; phosphatidylethanolamine biosynthesis; phosphatidylethanolamine from CDP-diacylglycerol: step 2/2. Functionally, catalyzes the formation of phosphatidylethanolamine (PtdEtn) from phosphatidylserine (PtdSer). This is Phosphatidylserine decarboxylase proenzyme from Nitrosomonas europaea (strain ATCC 19718 / CIP 103999 / KCTC 2705 / NBRC 14298).